Here is a 412-residue protein sequence, read N- to C-terminus: Inositol polyphosphate-5-phosphatase A (412 aa).

Residue cysteine 409 is the site of S-farnesyl cysteine attachment. A propeptide spans 410 to 412 (VVQ) (removed in mature form).

The protein belongs to the inositol 1,4,5-trisphosphate 5-phosphatase type I family. Interacts with TASOR. Post-translationally, isoprenylation at Cys-409 is required for localization at the membrane. Predominantly expressed in heart, brain, and skeletal muscle. In brain; high level in Purkinje cells.

Its subcellular location is the cell membrane. It localises to the cell projection. It is found in the dendrite. The enzyme catalyses 1D-myo-inositol 1,4,5-trisphosphate + H2O = 1D-myo-inositol 1,4-bisphosphate + phosphate. The catalysed reaction is 1D-myo-inositol 1,3,4,5-tetrakisphosphate + H2O = 1D-myo-inositol 1,3,4-trisphosphate + phosphate. In terms of biological role, phosphatase that specifically hydrolyzes the 5-phosphate of inositol 1,4,5-trisphosphate to inositol 1,4-bisphosphate, and inositol 1,3,4,5-tetrasphosphate to inositol 1,3,4-trisphosphate. Plays a crucial role in the survival of cerebellar Purkinje cells. This Homo sapiens (Human) protein is Inositol polyphosphate-5-phosphatase A.